Here is a 196-residue protein sequence, read N- to C-terminus: Ribosome maturation factor RimP (196 aa).

This sequence belongs to the RimP family.

The protein localises to the cytoplasm. Its function is as follows. Required for maturation of 30S ribosomal subunits. This chain is Ribosome maturation factor RimP, found in Lawsonia intracellularis (strain PHE/MN1-00).